The chain runs to 199 residues: Probable GTP-binding protein EngB (199 aa).

One can recognise an EngB-type G domain in the interval 22 to 195 (QLPEIALSGR…WEWIEQQCDI (174 aa)). GTP contacts are provided by residues 30 to 37 (GRSNVGKS), 57 to 61 (GKTQT), 75 to 78 (DVPG), 142 to 145 (TKMD), and 174 to 176 (FSA). Mg(2+)-binding residues include Ser-37 and Thr-59.

This sequence belongs to the TRAFAC class TrmE-Era-EngA-EngB-Septin-like GTPase superfamily. EngB GTPase family. Requires Mg(2+) as cofactor.

Functionally, necessary for normal cell division and for the maintenance of normal septation. The protein is Probable GTP-binding protein EngB of Latilactobacillus sakei subsp. sakei (strain 23K) (Lactobacillus sakei subsp. sakei).